The following is a 335-amino-acid chain: Fructose-1,6-bisphosphatase class 1 (335 aa).

Positions 90, 113, 115, and 116 each coordinate Mg(2+). Substrate contacts are provided by residues 116 to 119 (DGSS), Asn-209, Tyr-242, and Lys-272. Glu-278 is a Mg(2+) binding site.

It belongs to the FBPase class 1 family. In terms of assembly, homotetramer. It depends on Mg(2+) as a cofactor.

It localises to the cytoplasm. It catalyses the reaction beta-D-fructose 1,6-bisphosphate + H2O = beta-D-fructose 6-phosphate + phosphate. It participates in carbohydrate biosynthesis; gluconeogenesis. This chain is Fructose-1,6-bisphosphatase class 1, found in Mannheimia succiniciproducens (strain KCTC 0769BP / MBEL55E).